Here is a 492-residue protein sequence, read N- to C-terminus: Ribose import ATP-binding protein RbsA (492 aa).

ABC transporter domains lie at 3–239 (IDMR…VGRK) and 238–492 (RKLE…TGGK). Residue 35–42 (GENGAGKS) coordinates ATP.

The protein belongs to the ABC transporter superfamily. Ribose importer (TC 3.A.1.2.1) family. In terms of assembly, the complex is composed of an ATP-binding protein (RbsA), two transmembrane proteins (RbsC) and a solute-binding protein (RbsB).

The protein localises to the cell membrane. It carries out the reaction D-ribose(out) + ATP + H2O = D-ribose(in) + ADP + phosphate + H(+). Its function is as follows. Part of the ABC transporter complex RbsABC involved in ribose import. Responsible for energy coupling to the transport system. In Streptococcus agalactiae serotype V (strain ATCC BAA-611 / 2603 V/R), this protein is Ribose import ATP-binding protein RbsA.